We begin with the raw amino-acid sequence, 226 residues long: Ribonuclease 3 (226 aa).

In terms of domain architecture, RNase III spans 6–128 (MKKLQKFIGY…IIASIFLDSN (123 aa)). E41 contacts Mg(2+). Residue D45 is part of the active site. Mg(2+) contacts are provided by N114 and E117. Residue E117 is part of the active site. Residues 155–225 (DPKTRLQEYL…AQNALIRLEV (71 aa)) enclose the DRBM domain.

It belongs to the ribonuclease III family. As to quaternary structure, homodimer. Mg(2+) is required as a cofactor.

The protein localises to the cytoplasm. It catalyses the reaction Endonucleolytic cleavage to 5'-phosphomonoester.. Digests double-stranded RNA. Involved in the processing of primary rRNA transcript to yield the immediate precursors to the large and small rRNAs (23S and 16S). Processes some mRNAs, and tRNAs when they are encoded in the rRNA operon. Processes pre-crRNA and tracrRNA of type II CRISPR loci if present in the organism. This chain is Ribonuclease 3, found in Buchnera aphidicola subsp. Cinara cedri (strain Cc).